A 410-amino-acid chain; its full sequence is LL-diaminopimelate aminotransferase (410 aa).

Substrate contacts are provided by Tyr15 and Gly42. Pyridoxal 5'-phosphate is bound by residues Tyr72, 108 to 109 (SK), Tyr132, Asn187, Tyr218, and 246 to 248 (SFS). 3 residues coordinate substrate: Lys109, Tyr132, and Asn187. Lys249 carries the post-translational modification N6-(pyridoxal phosphate)lysine. Pyridoxal 5'-phosphate contacts are provided by Arg257 and Asn292. Substrate-binding residues include Asn292 and Arg388.

Belongs to the class-I pyridoxal-phosphate-dependent aminotransferase family. LL-diaminopimelate aminotransferase subfamily. Homodimer. Pyridoxal 5'-phosphate is required as a cofactor.

The enzyme catalyses (2S,6S)-2,6-diaminopimelate + 2-oxoglutarate = (S)-2,3,4,5-tetrahydrodipicolinate + L-glutamate + H2O + H(+). It participates in amino-acid biosynthesis; L-lysine biosynthesis via DAP pathway; LL-2,6-diaminopimelate from (S)-tetrahydrodipicolinate (aminotransferase route): step 1/1. Functionally, involved in the synthesis of meso-diaminopimelate (m-DAP or DL-DAP), required for both lysine and peptidoglycan biosynthesis. Catalyzes the direct conversion of tetrahydrodipicolinate to LL-diaminopimelate. This chain is LL-diaminopimelate aminotransferase, found in Geotalea daltonii (strain DSM 22248 / JCM 15807 / FRC-32) (Geobacter daltonii).